A 150-amino-acid polypeptide reads, in one-letter code: General odorant-binding protein 19d (150 aa).

The first 23 residues, 1-23 (MSHLVHLTVLLLVGILCLGATSA), serve as a signal peptide directing secretion. Cystine bridges form between Cys-41/Cys-72, Cys-68/Cys-126, and Cys-116/Cys-135.

Belongs to the PBP/GOBP family. In terms of tissue distribution, expressed in the antenna, mostly on the anterior surface of the third antennal segment. Also detected in the maxillary palps and in cells at the bases of the taste hairs on the proboscis and internal taste organs of the head.

The protein localises to the secreted. This Drosophila melanogaster (Fruit fly) protein is General odorant-binding protein 19d (Obp19d).